A 131-amino-acid polypeptide reads, in one-letter code: MSLQICVMTPDCIFLNKEVDEIILPTNTGQMGVLSNHAPLITALDIGVMLVRTQKDWESVAVMGGFALVKQNQITVLVNEAESKETIDPQEAEEAFATAKQTLEQATGQKEKVEANFAFKRARARYQVIGA.

The protein belongs to the ATPase epsilon chain family. F-type ATPases have 2 components, CF(1) - the catalytic core - and CF(0) - the membrane proton channel. CF(1) has five subunits: alpha(3), beta(3), gamma(1), delta(1), epsilon(1). CF(0) has three main subunits: a, b and c.

Its subcellular location is the plastid. The protein resides in the chloroplast thylakoid membrane. Its function is as follows. Produces ATP from ADP in the presence of a proton gradient across the membrane. The chain is ATP synthase epsilon chain, chloroplastic from Oltmannsiellopsis viridis (Marine flagellate).